The following is a 464-amino-acid chain: ATP synthase subunit beta 2 (464 aa).

153 to 160 (GGAGVGKT) is a binding site for ATP.

This sequence belongs to the ATPase alpha/beta chains family. As to quaternary structure, F-type ATPases have 2 components, CF(1) - the catalytic core - and CF(0) - the membrane proton channel. CF(1) has five subunits: alpha(3), beta(3), gamma(1), delta(1), epsilon(1). CF(0) has three main subunits: a(1), b(2) and c(9-12). The alpha and beta chains form an alternating ring which encloses part of the gamma chain. CF(1) is attached to CF(0) by a central stalk formed by the gamma and epsilon chains, while a peripheral stalk is formed by the delta and b chains.

It localises to the cell inner membrane. It carries out the reaction ATP + H2O + 4 H(+)(in) = ADP + phosphate + 5 H(+)(out). Its function is as follows. Produces ATP from ADP in the presence of a proton gradient across the membrane. The catalytic sites are hosted primarily by the beta subunits. This is ATP synthase subunit beta 2 from Paraburkholderia xenovorans (strain LB400).